Reading from the N-terminus, the 702-residue chain is Cytolytic toxin-alpha (702 aa).

The structural MACPF/CDC pore-forming domain stretch occupies residues 2–265 (SSDIIMAGLG…KADLLVRDIS (264 aa)). 5 N-linked (GlcNAc...) asparagine glycosylation sites follow: N93, N100, N201, N287, and N311. A structural FAT domain region spans residues 266-385 (QGLVRKVHSI…DIIEETKHKA (120 aa)). The tract at residues 386 to 513 (VLSQSQMVKD…PIISAVEKIV (128 aa)) is thioredoxin (THX) domain. Residues 505 to 702 (IISAVEKIVD…RPYHGTVRLL (198 aa)) form the B30.2/SPRY domain. N530 carries N-linked (GlcNAc...) asparagine glycosylation.

Belongs to the SNTX/VTX toxin family. Heterodimer of alpha and beta subunits; non-covalently linked. Also associates into tetramers or even higher aggregates. Intrachain disulfide bonds may be present in the heterodimer. As to expression, expressed by the venom gland.

The protein resides in the secreted. Functionally, this heterodimer induces potent hemolytic activities (when tested on rabbit erythrocytes, EC(50)=25-56 ng/mL) due to its ability to form pores in the cell membrane. The pore may be composed of 10 alpha/beta heterodimers. The toxin shows cardiovascular effects that include a vasorelaxant action that may involve the L-arginine-nitric oxid synthase pathway. In addition, it displays edema-inducing activities, increases vascular permeability. It also shows myotoxic activities and interferes irreversibly with neuromuscular function. It also induces irreversible platelet aggregation in rabbit or rat (but not in human or mouse) whole blood. In addition, it has been observed to increase spontaneous quantal acetylcholine release from isolated frog cutaneous pectoris motor endings. This is Cytolytic toxin-alpha from Scorpaena plumieri (Spotted scorpionfish).